The chain runs to 309 residues: Xylose/arabinose import permease protein XacI (309 aa).

6 helical membrane-spanning segments follow: residues 29–49, 89–109, 121–141, 170–190, 227–247, and 282–302; these read LVVF…MTAI, LIMS…AAYG, MLML…VPLA, ELVP…TILF, MFGV…LFAF, and AAFL…EQFA. The ABC transmembrane type-1 domain maps to 85–297; sequence FFNSLIMSIP…VPTLILYVAF (213 aa).

The protein belongs to the binding-protein-dependent transport system permease family. In terms of assembly, the complex is composed of two ATP-binding proteins (XacJ and XacK), two transmembrane proteins (XacH and XacI) and a solute-binding protein (XacG).

The protein resides in the cell membrane. Its function is as follows. Part of the ABC transporter complex XacGHIJK involved in the uptake of xylose and arabinose. Responsible for the translocation of the substrate across the membrane. This Haloferax volcanii (strain ATCC 29605 / DSM 3757 / JCM 8879 / NBRC 14742 / NCIMB 2012 / VKM B-1768 / DS2) (Halobacterium volcanii) protein is Xylose/arabinose import permease protein XacI.